A 497-amino-acid chain; its full sequence is 4,4'-diaponeurosporene oxygenase (497 aa).

7 to 19 (VIGGGLGGISAAI) contacts FAD.

The protein belongs to the carotenoid/retinoid oxidoreductase family. CrtP subfamily. Requires FAD as cofactor.

The catalysed reaction is all-trans-4,4'-diaponeurosporene + 2 AH2 + 2 O2 = 4,4'-diaponeurosporenal + 2 A + 3 H2O. The protein operates within carotenoid biosynthesis; staphyloxanthin biosynthesis; staphyloxanthin from farnesyl diphosphate: step 3/5. Its function is as follows. Involved in the biosynthesis of the yellow-orange carotenoid staphyloxanthin, which plays a role in the virulence via its protective function against oxidative stress. Catalyzes the oxidation of the terminal methyl side group of 4,4'-diaponeurosporene to form 4,4'-diaponeurosporen-4-al. The C40 carotenoid lycopene is a poor substrate. The chain is 4,4'-diaponeurosporene oxygenase from Staphylococcus aureus (strain Mu50 / ATCC 700699).